The sequence spans 693 residues: Cyclin-dependent kinase G-1 (693 aa).

Residues 1–10 (MAAGSHGGYR) show a composition bias toward gly residues. 2 disordered regions span residues 1–148 (MAAG…ARDP) and 236–308 (KKKK…DDYP). Positions 13–24 (EVAREREHDVGV) are enriched in basic and acidic residues. Over residues 26-39 (RRSKEHYHHRHPSR) the composition is skewed to basic residues. Composition is skewed to basic and acidic residues over residues 40–54 (HRDS…RSGG), 75–87 (RPSE…REPG), and 97–122 (RSGE…EEAK). Residues 268 to 284 (SVRSSSRSSDSGVLQGS) are compositionally biased toward low complexity. The segment covering 287 to 304 (RDLEVEKGDNIDVEKAAD) has biased composition (basic and acidic residues). The region spanning 349–640 (FERLNTINEG…AEDALNHEWF (292 aa)) is the Protein kinase domain. Residues 355–363 (INEGTYGVV) and lysine 378 each bind ATP. Threonine 359 carries the phosphothreonine modification. Residue tyrosine 360 is modified to Phosphotyrosine. Catalysis depends on aspartate 473, which acts as the Proton acceptor. Serine 500 carries the post-translational modification Phosphoserine. Threonine 506 is modified (phosphothreonine). Residues 664–693 (RFKKHMKSPDPLEEQWMKEQGNNGDRGLFG) form a disordered region.

The protein belongs to the protein kinase superfamily. CMGC Ser/Thr protein kinase family. CDC2/CDKX subfamily.

It catalyses the reaction L-seryl-[protein] + ATP = O-phospho-L-seryl-[protein] + ADP + H(+). The catalysed reaction is L-threonyl-[protein] + ATP = O-phospho-L-threonyl-[protein] + ADP + H(+). It carries out the reaction [DNA-directed RNA polymerase] + ATP = phospho-[DNA-directed RNA polymerase] + ADP + H(+). The chain is Cyclin-dependent kinase G-1 (CDKG-1) from Oryza sativa subsp. indica (Rice).